Consider the following 319-residue polypeptide: Nucleotide-binding protein Rru_A3448 (319 aa).

The interval 1-34 (MGRSASLLRLRDPAPLPTDIAPDPAEAPPSPAAD) is disordered. 42–49 (GMSGAGRT) contacts ATP. GTP is bound at residue 90-93 (DTRT).

The protein belongs to the RapZ-like family.

Its function is as follows. Displays ATPase and GTPase activities. The sequence is that of Nucleotide-binding protein Rru_A3448 from Rhodospirillum rubrum (strain ATCC 11170 / ATH 1.1.1 / DSM 467 / LMG 4362 / NCIMB 8255 / S1).